A 459-amino-acid chain; its full sequence is tRNA modification GTPase MnmE (459 aa).

Residues R23, E86, and R125 each coordinate (6S)-5-formyl-5,6,7,8-tetrahydrofolate. Positions 221-380 (GLKTVIVGKP…LQDKIESMVY (160 aa)) constitute a TrmE-type G domain. N231 serves as a coordination point for K(+). Residues 231–236 (NVGKSS), 250–256 (TDIPGTT), and 275–278 (DTAG) each bind GTP. Residue S235 coordinates Mg(2+). 3 residues coordinate K(+): T250, I252, and T255. Residue T256 coordinates Mg(2+). K459 lines the (6S)-5-formyl-5,6,7,8-tetrahydrofolate pocket.

This sequence belongs to the TRAFAC class TrmE-Era-EngA-EngB-Septin-like GTPase superfamily. TrmE GTPase family. As to quaternary structure, homodimer. Heterotetramer of two MnmE and two MnmG subunits. It depends on K(+) as a cofactor.

Its subcellular location is the cytoplasm. Its function is as follows. Exhibits a very high intrinsic GTPase hydrolysis rate. Involved in the addition of a carboxymethylaminomethyl (cmnm) group at the wobble position (U34) of certain tRNAs, forming tRNA-cmnm(5)s(2)U34. The polypeptide is tRNA modification GTPase MnmE (Clostridioides difficile (strain 630) (Peptoclostridium difficile)).